The sequence spans 213 residues: TVP38/TMEM64 family membrane protein YtxB (213 aa).

A run of 6 helical transmembrane segments spans residues 9–29 (WLAV…YLNV), 34–54 (IRVW…GISI), 58–78 (LVLF…GPLL), 81–101 (LYTL…AGLF), 159–179 (AVGI…FLAG), and 181–201 (LPAF…PFIF).

The protein belongs to the TVP38/TMEM64 family.

It is found in the cell membrane. This is TVP38/TMEM64 family membrane protein YtxB (ytxB) from Bacillus subtilis (strain 168).